Consider the following 291-residue polypeptide: MAVGKEILTKIRSVQNTQKITKAMQMVSTSKMRKTQERMRLARPYAEKVRMVMSHLAQTNTDHGIPLLESHREIRRVGFILITSDKGLCGGLNANVLKKFLAQVQEYRNQGIEEEIVCLGSKGLMACQSIGLNVIASAVNLGDTPKMEMLLGPLTELFQRYEKHEIDRIHLVYSGFVNTMRQEPRMEVLLPIGENVIGDSAPKSPFSWEYRYEPTALAVLEYLVRRYLESVVYQALSDNMASEQAARMVAMKAATDNAGNAIKELRLVYNKSRQAAITTELSEIVAGAAAV.

Belongs to the ATPase gamma chain family. F-type ATPases have 2 components, CF(1) - the catalytic core - and CF(0) - the membrane proton channel. CF(1) has five subunits: alpha(3), beta(3), gamma(1), delta(1), epsilon(1). CF(0) has three main subunits: a, b and c.

Its subcellular location is the cell inner membrane. In terms of biological role, produces ATP from ADP in the presence of a proton gradient across the membrane. The gamma chain is believed to be important in regulating ATPase activity and the flow of protons through the CF(0) complex. The protein is ATP synthase gamma chain of Neisseria meningitidis serogroup C / serotype 2a (strain ATCC 700532 / DSM 15464 / FAM18).